The primary structure comprises 181 residues: UPF0200 protein Ta0179 (181 aa).

ATP is bound at residue 6–13 (GMPGAGKD).

This sequence belongs to the UPF0200 family.

This Thermoplasma acidophilum (strain ATCC 25905 / DSM 1728 / JCM 9062 / NBRC 15155 / AMRC-C165) protein is UPF0200 protein Ta0179.